Reading from the N-terminus, the 382-residue chain is Gap junction alpha-1 protein (382 aa).

Topologically, residues 2–23 (GGWSALAKLLGKVQAYSPAGGK) are cytoplasmic. Serine 5 is modified (phosphoserine). A helical membrane pass occupies residues 24-44 (VWLSVLFIFRILLLGTAVESA). Topologically, residues 45 to 76 (WGDEQSAFRCNTQQPGCENVCYDKSFPISHVR) are extracellular. Intrachain disulfides connect cysteine 54–cysteine 192 and cysteine 187–cysteine 198. Residues 77 to 97 (FWVLQIIFVSVPTLLYLAHVF) form a helical membrane-spanning segment. At 98-155 (YVMRKEEKLNKKEEELKVAQTDGANVDMHLKQIEIKKFKYGIEEHGKVKMRGGLLRTY) the chain is on the cytoplasmic side. Residue lysine 144 forms a Glycyl lysine isopeptide (Lys-Gly) (interchain with G-Cter in SUMO) linkage. The helical transmembrane segment at 156–176 (IISILFKSVFEVAFLLIQWYI) threads the bilayer. Residues 177–207 (YGFSLSAVYTCKREPCPHQVDCFLSRPTEKT) are Extracellular-facing. Residues 208–228 (IFIIFMLVVSLVSLALNIIEL) traverse the membrane as a helical segment. The Cytoplasmic segment spans residues 229-382 (FYVFFKGVKD…SRPRPDDLEI (154 aa)). A Glycyl lysine isopeptide (Lys-Gly) (interchain with G-Cter in SUMO) cross-link involves residue lysine 237. The tract at residues 244–382 (SDPYHATTGP…SRPRPDDLEI (139 aa)) is interaction with NOV. The residue at position 247 (tyrosine 247) is a Phosphotyrosine. Serine 255, serine 257, and serine 262 each carry phosphoserine. The segment at 264–382 (EYAYFNGCSS…SRPRPDDLEI (119 aa)) is interaction with UBQLN4. Position 271 is an S-nitrosocysteine (cysteine 271). Threonine 275 is modified (phosphothreonine). 2 positions are modified to phosphoserine: serine 306 and serine 314. Residues 317-332 (QNRMGQAGSTISNSHA) show a composition bias toward polar residues. The tract at residues 317–382 (QNRMGQAGST…SRPRPDDLEI (66 aa)) is disordered. A Phosphoserine; by CK1 modification is found at serine 325. A Phosphothreonine modification is found at threonine 326. Serine 328 and serine 330 each carry phosphoserine; by CK1. Residues serine 344 and serine 365 each carry the phosphoserine modification. Over residues 362–374 (RPSSRASSRASSR) the composition is skewed to low complexity. Position 368 is a phosphoserine; by PKC/PRKCG and PKC/PRKCD (serine 368). Serine 369 and serine 373 each carry phosphoserine.

Belongs to the connexin family. Alpha-type (group II) subfamily. As to quaternary structure, a connexon is composed of a hexamer of connexins. Interacts with SGSM3. Interacts with RIC1/CIP150. Interacts with CNST and CSNK1D. Interacts (via C-terminus) with TJP1. Interacts (via C-terminus) with SRC (via SH3 domain). Interacts (not ubiquitinated) with UBQLN4 (via UBA domain). Interacts with NOV. Interacts with TMEM65. Interacts with ANK3/ANKG and PKP2. Post-translationally, phosphorylation at Ser-325, Ser-328 and Ser-330 by CK1 modulates gap junction assembly. Phosphorylated at Ser-368 by PRKCG; phosphorylation induces disassembly of gap junction plaques and inhibition of gap junction activity. Phosphorylation at Ser-368 by PRKCD triggers its internalization into small vesicles leading to proteasome-mediated degradation. Sumoylated with SUMO1, SUMO2 and SUMO3, which may regulate the level of functional Cx43 gap junctions at the plasma membrane. May be desumoylated by SENP1 or SENP2. In terms of processing, S-nitrosylation at Cys-271 is enriched at the muscle endothelial gap junction in arteries, it augments channel permeability and may regulate of smooth muscle cell to endothelial cell communication. Post-translationally, acetylated in the developing cortex; leading to delocalization from the cell membrane.

It is found in the cell membrane. Its subcellular location is the cell junction. It localises to the gap junction. The protein localises to the endoplasmic reticulum. Its function is as follows. Gap junction protein that acts as a regulator of bladder capacity. A gap junction consists of a cluster of closely packed pairs of transmembrane channels, the connexons, through which materials of low MW diffuse from one cell to a neighboring cell. May play a critical role in the physiology of hearing by participating in the recycling of potassium to the cochlear endolymph. Negative regulator of bladder functional capacity: acts by enhancing intercellular electrical and chemical transmission, thus sensitizing bladder muscles to cholinergic neural stimuli and causing them to contract. May play a role in cell growth inhibition through the regulation of NOV expression and localization. Plays an essential role in gap junction communication in the ventricles. The protein is Gap junction alpha-1 protein (GJA1) of Canis lupus familiaris (Dog).